Consider the following 450-residue polypeptide: Signal recognition particle 54 kDa protein (450 aa).

GTP-binding positions include 107-114, 188-192, and 247-250; these read GIQGSGKT, DTAGR, and TKLD.

It belongs to the GTP-binding SRP family. SRP54 subfamily. In terms of assembly, part of the signal recognition particle protein translocation system, which is composed of SRP and FtsY. Archaeal SRP consists of a 7S RNA molecule of 300 nucleotides and two protein subunits: SRP54 and SRP19.

It is found in the cytoplasm. The catalysed reaction is GTP + H2O = GDP + phosphate + H(+). Functionally, involved in targeting and insertion of nascent membrane proteins into the cytoplasmic membrane. Binds to the hydrophobic signal sequence of the ribosome-nascent chain (RNC) as it emerges from the ribosomes. The SRP-RNC complex is then targeted to the cytoplasmic membrane where it interacts with the SRP receptor FtsY. This Methanococcus maripaludis (strain C5 / ATCC BAA-1333) protein is Signal recognition particle 54 kDa protein.